The primary structure comprises 177 residues: Glutamyl-tRNA(Gln) amidotransferase subunit F, mitochondrial (177 aa).

A mitochondrion-targeting transit peptide spans 1–16 (MIRINSRGLTVSTRRF). The interval 148–177 (PAKGETQGSFNVANMNPRNRPFATIRSKQG) is disordered. Residues 153-164 (TQGSFNVANMNP) show a composition bias toward polar residues.

The protein belongs to the GatF family. In terms of assembly, subunit of the heterotrimeric GatFAB amidotransferase (AdT) complex, composed of A, B and F subunits.

The protein resides in the mitochondrion inner membrane. The catalysed reaction is L-glutamyl-tRNA(Gln) + L-glutamine + ATP + H2O = L-glutaminyl-tRNA(Gln) + L-glutamate + ADP + phosphate + H(+). Its function is as follows. Allows the formation of correctly charged Gln-tRNA(Gln) through the transamidation of misacylated Glu-tRNA(Gln) in the mitochondria. The reaction takes place in the presence of glutamine and ATP through an activated gamma-phospho-Glu-tRNA(Gln). Required for proper protein synthesis within the mitochondrion. This is Glutamyl-tRNA(Gln) amidotransferase subunit F, mitochondrial from Scheffersomyces stipitis (strain ATCC 58785 / CBS 6054 / NBRC 10063 / NRRL Y-11545) (Yeast).